Consider the following 390-residue polypeptide: Putative 8-amino-7-oxononanoate synthase (390 aa).

R20 provides a ligand contact to substrate. A pyridoxal 5'-phosphate-binding site is contributed by 107–108; it reads GY. H132 lines the substrate pocket. Pyridoxal 5'-phosphate contacts are provided by residues S181, 206 to 209, and 237 to 240; these read DDAH and TLGK. K240 carries the post-translational modification N6-(pyridoxal phosphate)lysine. Position 356 (T356) interacts with substrate.

Belongs to the class-II pyridoxal-phosphate-dependent aminotransferase family. BioF subfamily. As to quaternary structure, homodimer. Requires pyridoxal 5'-phosphate as cofactor.

It carries out the reaction 6-carboxyhexanoyl-[ACP] + L-alanine + H(+) = (8S)-8-amino-7-oxononanoate + holo-[ACP] + CO2. Its pathway is cofactor biosynthesis; biotin biosynthesis. In terms of biological role, catalyzes the decarboxylative condensation of pimeloyl-[acyl-carrier protein] and L-alanine to produce 8-amino-7-oxononanoate (AON), [acyl-carrier protein], and carbon dioxide. This Syntrophotalea carbinolica (strain DSM 2380 / NBRC 103641 / GraBd1) (Pelobacter carbinolicus) protein is Putative 8-amino-7-oxononanoate synthase (bioF).